The sequence spans 1086 residues: Endo-1,4-beta-xylanase C (1086 aa).

The first 31 residues, 1–31, serve as a signal peptide directing secretion; the sequence is MRGKWLRLCLAAVLIVSLLPGLGAGEWKASA. CBM-cenC domains follow at residues 35 to 183 and 197 to 359; these read GDIL…IRLV and GQAL…ITAT. In terms of domain architecture, GH10 spans 365–710; that stretch reads EKNIPDLAKK…KPAYWALVDP (346 aa). The active-site Proton donor is the E502. D556 is a catalytic residue. E620 acts as the Nucleophile in catalysis.

It belongs to the glycosyl hydrolase 10 (cellulase F) family.

The catalysed reaction is Endohydrolysis of (1-&gt;4)-beta-D-xylosidic linkages in xylans.. It participates in glycan degradation; xylan degradation. In terms of biological role, endoxylanase with high hydrolytic activity on birchwood and oat spelt xylan. Xylotetraose, xylotriose, xylobiose and xylose are the main products from birchwood xylan hydrolysis. Shows increasing activity on xylo-oligosaccharides of increasing length. Displays very low hydrolytic activity on Avicel, carboxymethylcellulose (CMC) and p-nitrophenyl-beta-xylopyranoside. Also shows transxylosidase activity, allowing the formation of xylo-oligosaccharides of higher degree of polymerization than the starting substrate. In Paenibacillus barcinonensis, this protein is Endo-1,4-beta-xylanase C (xynC).